The following is a 92-amino-acid chain: UPF0250 protein Rmag_0541 (92 aa).

The protein belongs to the UPF0250 family.

This chain is UPF0250 protein Rmag_0541, found in Ruthia magnifica subsp. Calyptogena magnifica.